The following is a 461-amino-acid chain: ATP synthase subunit beta (461 aa).

Residue 151 to 158 (GGAGVGKT) participates in ATP binding.

The protein belongs to the ATPase alpha/beta chains family. F-type ATPases have 2 components, CF(1) - the catalytic core - and CF(0) - the membrane proton channel. CF(1) has five subunits: alpha(3), beta(3), gamma(1), delta(1), epsilon(1). CF(0) has three main subunits: a(1), b(2) and c(9-12). The alpha and beta chains form an alternating ring which encloses part of the gamma chain. CF(1) is attached to CF(0) by a central stalk formed by the gamma and epsilon chains, while a peripheral stalk is formed by the delta and b chains.

The protein resides in the cell inner membrane. It carries out the reaction ATP + H2O + 4 H(+)(in) = ADP + phosphate + 5 H(+)(out). In terms of biological role, produces ATP from ADP in the presence of a proton gradient across the membrane. The catalytic sites are hosted primarily by the beta subunits. In Pseudoalteromonas translucida (strain TAC 125), this protein is ATP synthase subunit beta.